Consider the following 54-residue polypeptide: Ribulose bisphosphate carboxylase large chain (54 aa).

The propeptide occupies 1–2 (MS). N-acetylproline is present on Pro3. N6,N6,N6-trimethyllysine is present on Lys14.

This sequence belongs to the RuBisCO large chain family. Type I subfamily. Heterohexadecamer of 8 large chains and 8 small chains.

The protein resides in the plastid. The protein localises to the chloroplast. It carries out the reaction 2 (2R)-3-phosphoglycerate + 2 H(+) = D-ribulose 1,5-bisphosphate + CO2 + H2O. The enzyme catalyses D-ribulose 1,5-bisphosphate + O2 = 2-phosphoglycolate + (2R)-3-phosphoglycerate + 2 H(+). Functionally, ruBisCO catalyzes two reactions: the carboxylation of D-ribulose 1,5-bisphosphate, the primary event in carbon dioxide fixation, as well as the oxidative fragmentation of the pentose substrate in the photorespiration process. Both reactions occur simultaneously and in competition at the same active site. This chain is Ribulose bisphosphate carboxylase large chain (rbcL), found in Colletia hystrix (Crucifixion thorn).